Reading from the N-terminus, the 651-residue chain is Acetyl-coenzyme A synthetase (651 aa).

Residues 189–192 (RGGK), Thr311, and Asn335 contribute to the CoA site. ATP-binding positions include 387–389 (GEP), 411–416 (DTWWQT), Asp500, and Arg515. Ser523 contacts CoA. Arg526 is a binding site for ATP. Positions 537, 539, and 542 each coordinate Mg(2+). Arg586 serves as a coordination point for CoA. Lys611 carries the N6-acetyllysine modification.

Belongs to the ATP-dependent AMP-binding enzyme family. The cofactor is Mg(2+). Acetylated. Deacetylation by the SIR2-homolog deacetylase activates the enzyme.

It catalyses the reaction acetate + ATP + CoA = acetyl-CoA + AMP + diphosphate. In terms of biological role, catalyzes the conversion of acetate into acetyl-CoA (AcCoA), an essential intermediate at the junction of anabolic and catabolic pathways. AcsA undergoes a two-step reaction. In the first half reaction, AcsA combines acetate with ATP to form acetyl-adenylate (AcAMP) intermediate. In the second half reaction, it can then transfer the acetyl group from AcAMP to the sulfhydryl group of CoA, forming the product AcCoA. The polypeptide is Acetyl-coenzyme A synthetase (Brucella anthropi (strain ATCC 49188 / DSM 6882 / CCUG 24695 / JCM 21032 / LMG 3331 / NBRC 15819 / NCTC 12168 / Alc 37) (Ochrobactrum anthropi)).